We begin with the raw amino-acid sequence, 113 residues long: Large ribosomal subunit protein uL22 (113 aa).

This sequence belongs to the universal ribosomal protein uL22 family. As to quaternary structure, part of the 50S ribosomal subunit.

Its function is as follows. This protein binds specifically to 23S rRNA; its binding is stimulated by other ribosomal proteins, e.g. L4, L17, and L20. It is important during the early stages of 50S assembly. It makes multiple contacts with different domains of the 23S rRNA in the assembled 50S subunit and ribosome. The globular domain of the protein is located near the polypeptide exit tunnel on the outside of the subunit, while an extended beta-hairpin is found that lines the wall of the exit tunnel in the center of the 70S ribosome. This Desulforudis audaxviator (strain MP104C) protein is Large ribosomal subunit protein uL22.